Consider the following 539-residue polypeptide: Sporozoite-associated protein (539 aa).

N-linked (GlcNAc...) asparagine glycosylation is found at asparagine 31, asparagine 90, asparagine 102, asparagine 149, and asparagine 167. The interval 126 to 153 (LTQSPPPAAAPQSPSPRAILSPRNVSKT) is disordered. The span at 192-215 (VVAEKSNTPTTPKTTPNGKWTGKN) shows a compositional bias: low complexity. Positions 192–231 (VVAEKSNTPTTPKTTPNGKWTGKNANATIETSNTDHTPPS) are disordered. Over residues 216–228 (ANATIETSNTDHT) the composition is skewed to polar residues. 3 N-linked (GlcNAc...) asparagine glycosylation sites follow: asparagine 217, asparagine 271, and asparagine 288. The tract at residues 303–355 (TLISRAQDDKPGTKGGSDETSSSTAASNERQPMFPNDNDDDDIDQTYCPGVES) is disordered. Residues 320 to 332 (DETSSSTAASNER) show a composition bias toward polar residues. Residues asparagine 427 and asparagine 503 are each glycosylated (N-linked (GlcNAc...) asparagine).

As to expression, saliva (at protein level). Female salivary gland. Female midgut.

It is found in the secreted. Its function is as follows. Binds heparan sulfate proteoglycans present on the mammalian cell surface. Modulates host immune responses at the site of inoculation via decreasing the expression of TNF-alpha/TNF, IL-1beta/IL1B, IFN-gamma/IFNG, IL4, MMP9, TGF-beta and ICAM1. (Microbial infection) Interacts with the surface of Plasmodium berghei sporozoites. Promotes Plasmodium berghei transmission to the mouse host. Does not affect Plasmodium berghei sporozoite viability. In terms of biological role, (Microbial infection) Interacts with the surface of Plasmodium falciparum sporozoites. The polypeptide is Sporozoite-associated protein (Anopheles gambiae (African malaria mosquito)).